The chain runs to 372 residues: Tyrosine--tRNA ligase 1 (372 aa).

L-tyrosine-binding residues include tyrosine 37, tyrosine 169, glutamine 173, aspartate 176, and glutamine 191. The short motif at 246 to 250 (KMSKS) is the 'KMSKS' region element. Position 249 (lysine 249) interacts with ATP.

Belongs to the class-I aminoacyl-tRNA synthetase family. TyrS type 4 subfamily. Homodimer.

It localises to the cytoplasm. It carries out the reaction tRNA(Tyr) + L-tyrosine + ATP = L-tyrosyl-tRNA(Tyr) + AMP + diphosphate + H(+). In terms of biological role, catalyzes the attachment of tyrosine to tRNA(Tyr) in a two-step reaction: tyrosine is first activated by ATP to form Tyr-AMP and then transferred to the acceptor end of tRNA(Tyr). This is Tyrosine--tRNA ligase 1 from Pyrobaculum aerophilum (strain ATCC 51768 / DSM 7523 / JCM 9630 / CIP 104966 / NBRC 100827 / IM2).